A 90-amino-acid polypeptide reads, in one-letter code: Mitochondrial import inner membrane translocase subunit Tim8 A (90 aa).

A Twin CX3C motif motif is present at residues 36–59; the sequence is CWEKCMDKPGPKLDSRTEVCFVNC. Intrachain disulfides connect Cys36–Cys59 and Cys40–Cys55.

This sequence belongs to the small Tim family. As to quaternary structure, heterohexamer; composed of 3 copies of TIMM8A and 3 copies of TIMM13, named soluble 70 kDa complex. Associates with the TIM22 complex, whose core is composed of TIMM22.

It localises to the mitochondrion inner membrane. Mitochondrial intermembrane chaperone that participates in the import and insertion of some multi-pass transmembrane proteins into the mitochondrial inner membrane. Also required for the transfer of beta-barrel precursors from the TOM complex to the sorting and assembly machinery (SAM complex) of the outer membrane. Acts as a chaperone-like protein that protects the hydrophobic precursors from aggregation and guide them through the mitochondrial intermembrane space. The TIMM8-TIMM13 complex mediates the import of some proteins while the predominant TIMM9-TIMM10 70 kDa complex mediates the import of much more proteins. This is Mitochondrial import inner membrane translocase subunit Tim8 A (timm8a) from Danio rerio (Zebrafish).